The chain runs to 359 residues: Small ribosomal subunit biogenesis GTPase RsgA (359 aa).

A CP-type G domain is found at 101 to 259 (KRKGSQAIAS…LMDNPGIREV (159 aa)). Residues 149 to 152 (NKKD) and 201 to 209 (GSSGAGKST) contribute to the GTP site. Residues Cys284, Cys289, His291, and Cys297 each coordinate Zn(2+). Residues 331–359 (DPEEARKKKQKDKQMSKALQKRLKDKGRK) are disordered. The span at 349–359 (LQKRLKDKGRK) shows a compositional bias: basic residues.

Belongs to the TRAFAC class YlqF/YawG GTPase family. RsgA subfamily. Monomer. Associates with 30S ribosomal subunit, binds 16S rRNA. Requires Zn(2+) as cofactor.

The protein localises to the cytoplasm. In terms of biological role, one of several proteins that assist in the late maturation steps of the functional core of the 30S ribosomal subunit. Helps release RbfA from mature subunits. May play a role in the assembly of ribosomal proteins into the subunit. Circularly permuted GTPase that catalyzes slow GTP hydrolysis, GTPase activity is stimulated by the 30S ribosomal subunit. In Leptospira interrogans serogroup Icterohaemorrhagiae serovar copenhageni (strain Fiocruz L1-130), this protein is Small ribosomal subunit biogenesis GTPase RsgA.